A 417-amino-acid chain; its full sequence is Indole-3-pyruvate monooxygenase YUCCA6 (417 aa).

An FAD-binding site is contributed by 36-41; that stretch reads GAGPSG. 204-209 is a binding site for NADP(+); it reads GCGNSG.

Belongs to the FMO family. It depends on FAD as a cofactor. As to expression, highly expressed in roots but modestly expressed in the cauline leaves and flowers. Expressed in anthers.

The protein resides in the cytoplasm. It catalyses the reaction indole-3-pyruvate + NADPH + O2 + H(+) = (indol-3-yl)acetate + CO2 + NADP(+) + H2O. It functions in the pathway plant hormone metabolism; auxin biosynthesis. Functionally, involved in auxin biosynthesis via the indole-3-pyruvic acid (IPA) pathway. Also able to convert in vitro phenyl pyruvate (PPA) to phenyl acetic acid (PAA). Required for the formation of floral organs and vascular tissues. Belongs to the set of redundant YUCCA genes probably responsible for auxin biosynthesis in shoots. This chain is Indole-3-pyruvate monooxygenase YUCCA6 (YUC6), found in Arabidopsis thaliana (Mouse-ear cress).